The primary structure comprises 367 residues: Phospho-N-acetylmuramoyl-pentapeptide-transferase (367 aa).

Helical transmembrane passes span 16–36 (LLLAAAAFILTLIVGGWWVHF), 62–82 (TMGGVMIVSTVVVLTVLFNLV), 87–107 (MLLPLGVMISFAVLGAIDDWL), 125–145 (FWIMTAVAFVASLALYLPQPY), 158–178 (VGEVNIGLWFIPIAVLIIVFI), 190–210 (SLAGWNLTLSFGAYGVITFLA), 214–234 (LTNLMAFCFTVVGACAAFLWY), 240–260 (QVFMGDLGALSLGATLAVVAL), 264–284 (QWILLPVIGIVFVVEALSTLI), and 326–346 (FVLIGTVAAMVGISLALIFGS).

The protein belongs to the glycosyltransferase 4 family. MraY subfamily. Requires Mg(2+) as cofactor.

The protein resides in the cell membrane. The enzyme catalyses UDP-N-acetyl-alpha-D-muramoyl-L-alanyl-gamma-D-glutamyl-meso-2,6-diaminopimeloyl-D-alanyl-D-alanine + di-trans,octa-cis-undecaprenyl phosphate = di-trans,octa-cis-undecaprenyl diphospho-N-acetyl-alpha-D-muramoyl-L-alanyl-D-glutamyl-meso-2,6-diaminopimeloyl-D-alanyl-D-alanine + UMP. It functions in the pathway cell wall biogenesis; peptidoglycan biosynthesis. Its function is as follows. Catalyzes the initial step of the lipid cycle reactions in the biosynthesis of the cell wall peptidoglycan: transfers peptidoglycan precursor phospho-MurNAc-pentapeptide from UDP-MurNAc-pentapeptide onto the lipid carrier undecaprenyl phosphate, yielding undecaprenyl-pyrophosphoryl-MurNAc-pentapeptide, known as lipid I. This chain is Phospho-N-acetylmuramoyl-pentapeptide-transferase, found in Chloroflexus aggregans (strain MD-66 / DSM 9485).